A 77-amino-acid polypeptide reads, in one-letter code: Large ribosomal subunit protein eL20 (77 aa).

Belongs to the eukaryotic ribosomal protein eL20 family. Part of the 50S ribosomal subunit. Binds 23S rRNA.

The sequence is that of Large ribosomal subunit protein eL20 from Pyrococcus abyssi (strain GE5 / Orsay).